Reading from the N-terminus, the 356-residue chain is MANIDINKLKAIENAMGQIEKQFGKGSVMKLGEDSVLNIDAISTGCLDLDIALGIGGVPKGRIVEIYGPESSGKTTIALHIAAEAQKKGGAVGFIDAEHALDPSYARNLGVDTENLIVSQPDTGEQGLEIAEALVRSGAIDVIIVDSVAALVPKAEIEGEMGDSHIGLQARLMSQALRKLAGTISKTNCIAIFINQLREKVGVMFGSPETTTGGRALKFYASVRLDVRRIDSIKQGDGIVGNRTRIKVTKNKVAPPFKQAEFDIMYNEGISREGNIVDVGVKEEIVQKSGAWFSYGDIRLGQGRENAKQYLKENPEVALDIENQIREKHNLPLMDAVIKETSQEVKGKENKEQSDK.

68 to 75 is a binding site for ATP; it reads GPESSGKT.

The protein belongs to the RecA family.

Its subcellular location is the cytoplasm. In terms of biological role, can catalyze the hydrolysis of ATP in the presence of single-stranded DNA, the ATP-dependent uptake of single-stranded DNA by duplex DNA, and the ATP-dependent hybridization of homologous single-stranded DNAs. It interacts with LexA causing its activation and leading to its autocatalytic cleavage. The protein is Protein RecA of Clostridium botulinum (strain Alaska E43 / Type E3).